Here is a 308-residue protein sequence, read N- to C-terminus: Glycosyltransferase 6 domain-containing protein 1 (308 aa).

The Cytoplasmic segment spans residues M1–M6. The chain crosses the membrane as a helical; Signal-anchor for type II membrane protein span at residues L7–F23. The Lumenal portion of the chain corresponds to R24–L308. An N-linked (GlcNAc...) asparagine glycan is attached at N74. Residues F82–F87, A173–N175, and H195–W198 contribute to the substrate site. E263 acts as the Nucleophile in catalysis.

Belongs to the glycosyltransferase 6 family. Mn(2+) serves as cofactor.

It localises to the membrane. This is Glycosyltransferase 6 domain-containing protein 1 (GLT6D1) from Macaca fascicularis (Crab-eating macaque).